The chain runs to 1645 residues: Cortactin-binding protein 2 (1645 aa).

5 disordered regions span residues Met-1–Lys-28, Leu-269–Ile-293, Ile-366–His-435, Gly-451–Ser-478, and Ala-492–Pro-612. A coiled-coil region spans residues Arg-119 to Lys-276. Composition is skewed to polar residues over residues Gln-407 to Ala-417 and Gly-451 to Asp-477. Arg-495 is modified (asymmetric dimethylarginine). Residues Thr-580–Gln-590 show a composition bias toward polar residues. ANK repeat units follow at residues Gly-706 to Tyr-736, Asp-740 to Ala-769, Asn-773 to His-802, Glu-806 to Val-835, Asp-839 to Arg-868, and Glu-909 to Arg-939. A disordered region spans residues Arg-868–Ile-898. The segment at Cys-1442–Glu-1479 is disordered. The residue at position 1521 (Ser-1521) is a Phosphoserine. Residues Asp-1551–Ile-1645 are disordered. Composition is skewed to polar residues over residues Ser-1558 to Val-1569 and Pro-1582 to Lys-1597. Low complexity predominate over residues Ser-1620–Gln-1634. The segment covering Ile-1635 to Ile-1645 has biased composition (polar residues).

Interacts with CTTN/cortactin SH3 domain. Interacts with STRN, STRN4/zinedin and MOB4/phocein; this interactions mediate the association with the STRIPAK core complex and may regulate dendritic spine distribution of the STRIPAK complex in hippocampal neurons. Activation of glutamate receptors weakens the interaction with STRN and STRN4.

It localises to the cytoplasm. The protein localises to the cell cortex. It is found in the cell projection. Its subcellular location is the dendritic spine. Functionally, regulates the dendritic spine distribution of CTTN/cortactin in hippocampal neurons, and thus controls dendritic spinogenesis and dendritic spine maintenance. Associates with the striatin-interacting phosphatase and kinase (STRIPAK) core complex to regulate dendritic spine distribution of the STRIPAK complex in hippocampal neurons. The polypeptide is Cortactin-binding protein 2 (CTTNBP2) (Mustela putorius furo (European domestic ferret)).